The sequence spans 79 residues: Conotoxin Vi6.4 (79 aa).

The first 22 residues, M1–A22, serve as a signal peptide directing secretion. Residues D23–R47 constitute a propeptide that is removed on maturation. Cystine bridges form between C49/C62, C56/C67, and C61/C77. A 4-hydroxyproline mark is found at P60 and P63.

The protein belongs to the conotoxin O1 superfamily. Expressed by the venom duct.

It localises to the secreted. Ion channel inhibitor that inhibits the increase in intracellular calcium upon depolarization in DRG neurons. In vivo, both intraperitoneal and intracranial injections into mice induce hyperactivity. This is Conotoxin Vi6.4 from Conus virgo (Virgin cone).